Reading from the N-terminus, the 484-residue chain is UDP-N-acetylmuramoyl-L-alanyl-D-glutamate--2,6-diaminopimelate ligase (484 aa).

UDP-N-acetyl-alpha-D-muramoyl-L-alanyl-D-glutamate is bound at residue S29. Residue 108-114 (GTSGKTS) participates in ATP binding. Residues 150–151 (TT), S177, Q183, and R185 each bind UDP-N-acetyl-alpha-D-muramoyl-L-alanyl-D-glutamate. K217 bears the N6-carboxylysine mark. Residues R381, 405-408 (DNPR), G453, and E457 each bind meso-2,6-diaminopimelate. The Meso-diaminopimelate recognition motif motif lies at 405–408 (DNPR).

This sequence belongs to the MurCDEF family. MurE subfamily. Mg(2+) serves as cofactor. Carboxylation is probably crucial for Mg(2+) binding and, consequently, for the gamma-phosphate positioning of ATP.

The protein localises to the cytoplasm. The enzyme catalyses UDP-N-acetyl-alpha-D-muramoyl-L-alanyl-D-glutamate + meso-2,6-diaminopimelate + ATP = UDP-N-acetyl-alpha-D-muramoyl-L-alanyl-gamma-D-glutamyl-meso-2,6-diaminopimelate + ADP + phosphate + H(+). The protein operates within cell wall biogenesis; peptidoglycan biosynthesis. Functionally, catalyzes the addition of meso-diaminopimelic acid to the nucleotide precursor UDP-N-acetylmuramoyl-L-alanyl-D-glutamate (UMAG) in the biosynthesis of bacterial cell-wall peptidoglycan. The protein is UDP-N-acetylmuramoyl-L-alanyl-D-glutamate--2,6-diaminopimelate ligase of Mesorhizobium japonicum (strain LMG 29417 / CECT 9101 / MAFF 303099) (Mesorhizobium loti (strain MAFF 303099)).